A 379-amino-acid chain; its full sequence is Dual-specificity RNA methyltransferase RlmN (379 aa).

E95 acts as the Proton acceptor in catalysis. Positions 101–345 (EETRGTLCVS…TTVRKTRGDD (245 aa)) constitute a Radical SAM core domain. A disulfide bond links C108 and C350. [4Fe-4S] cluster contacts are provided by C115, C119, and C122. Residues 176–177 (GE), S208, 230–232 (SLH), and N307 contribute to the S-adenosyl-L-methionine site. Catalysis depends on C350, which acts as the S-methylcysteine intermediate.

It belongs to the radical SAM superfamily. RlmN family. It depends on [4Fe-4S] cluster as a cofactor.

Its subcellular location is the cytoplasm. The enzyme catalyses adenosine(2503) in 23S rRNA + 2 reduced [2Fe-2S]-[ferredoxin] + 2 S-adenosyl-L-methionine = 2-methyladenosine(2503) in 23S rRNA + 5'-deoxyadenosine + L-methionine + 2 oxidized [2Fe-2S]-[ferredoxin] + S-adenosyl-L-homocysteine. It catalyses the reaction adenosine(37) in tRNA + 2 reduced [2Fe-2S]-[ferredoxin] + 2 S-adenosyl-L-methionine = 2-methyladenosine(37) in tRNA + 5'-deoxyadenosine + L-methionine + 2 oxidized [2Fe-2S]-[ferredoxin] + S-adenosyl-L-homocysteine. Functionally, specifically methylates position 2 of adenine 2503 in 23S rRNA and position 2 of adenine 37 in tRNAs. m2A2503 modification seems to play a crucial role in the proofreading step occurring at the peptidyl transferase center and thus would serve to optimize ribosomal fidelity. In Burkholderia cenocepacia (strain ATCC BAA-245 / DSM 16553 / LMG 16656 / NCTC 13227 / J2315 / CF5610) (Burkholderia cepacia (strain J2315)), this protein is Dual-specificity RNA methyltransferase RlmN.